The following is a 525-amino-acid chain: DNA damage-binding protein CMR1 (525 aa).

2 disordered regions span residues 38-86 (AGIF…AESE) and 212-233 (GILDASQQPDQNESDEEDEYPD). A compositionally biased stretch (basic residues) spans 53–62 (TKKKPAPKRV). WD repeat units follow at residues 183–224 (ITRE…DQNE), 241–281 (PHTN…ATEA), 288–328 (SDDE…KANP), 339–379 (LSEK…TKHP), 384–425 (EHES…KDWK), 448–491 (GKWV…LAQL), and 494–525 (DVITAVPAVAVFHRTQNWVVGGTGSAKVCLWM). Positions 223 to 232 (NESDEEDEYP) are enriched in acidic residues.

This sequence belongs to the WD repeat DDB2/WDR76 family.

In terms of biological role, DNA-binding protein that binds to both single- and double-stranded DNA. Binds preferentially to UV-damaged DNA. May be involved in DNA-metabolic processes. The polypeptide is DNA damage-binding protein CMR1 (Coccidioides immitis (strain RS) (Valley fever fungus)).